The chain runs to 330 residues: DNA-directed RNA polymerase subunit alpha (330 aa).

Residues 1 to 235 form an alpha N-terminal domain (alpha-NTD) region; that stretch reads MQGSVTEFLK…EQLEAFVDLR (235 aa). The alpha C-terminal domain (alpha-CTD) stretch occupies residues 249-330; sequence FDPILLRPVD…WPPASIADNE (82 aa).

It belongs to the RNA polymerase alpha chain family. In terms of assembly, homodimer. The RNAP catalytic core consists of 2 alpha, 1 beta, 1 beta' and 1 omega subunit. When a sigma factor is associated with the core the holoenzyme is formed, which can initiate transcription.

It catalyses the reaction RNA(n) + a ribonucleoside 5'-triphosphate = RNA(n+1) + diphosphate. In terms of biological role, DNA-dependent RNA polymerase catalyzes the transcription of DNA into RNA using the four ribonucleoside triphosphates as substrates. This is DNA-directed RNA polymerase subunit alpha from Yersinia enterocolitica serotype O:8 / biotype 1B (strain NCTC 13174 / 8081).